A 978-amino-acid chain; its full sequence is MKLEHPDRLMNRTPLSLAALEVHDAFAERHIGPDAADQHAMLEALGFASRAALIDAVIPKTIRRTETLPLGPFTQPKSEAEALAALRELADKNQVFRSYIGQGYYNAHTPTVILRNVLENPAWYTAYTPYQPEISQGRLEALLNFQQMIVDLTGLAISNASLLDEATAAAEAMTLLQRVGKPKSNVFFVADDVLPQTIEVVRTRATPVGIEVKVGPASEAANANAFGVLLQYPGVNGDVRDYRALTEAIHAAGGHVVVAADLLALTVLTPPGEWGADVAVGNTQRFGVPVGFGGPHAAYLAVRDEFKRQMPGRLVGVTVDAQGNPALRLALQTREQHIRREKATSNVCTAQALLAIMASMYAVYHGPHGLKTIALRVNRIAALLAEGAKQLGYTLANETFFDTLTFDTGARTQALLDAATAKRINLRRVSATQVGLSIDETTTRHDLADLLAVFAQAAFTNDVPQVDALDAKLAASNTASVPAALERTSAYLTHHVFNRHHSETEMLRYLRSLSDKDLALDRSMIPLGSCTMKLNATSEMLPVTWPEFGQIHPFAPAEQTVGYREMIDQLEEMLVAATGYAAVSLQPNAGSQGEYAGLLIIHAYHASRGEAHRNVCLIPASAHGTNPASAQMAGMQVVVVACDAQGNVDIEDLKKKAGQHADKLAAIMITYPSTHGVFEQNVREICEIVHAHGGQVYVDGANMNAMVGLTAPGQFGGDVSHLNLHKTFCIPHGGGGPGVGPVAVGAHLAQFLPNQISSGYERAPNGIGAVSGAPYGSASILPISWMYIAMMGAKNLTAATETAILNANYVAKKLAPHYPVLYSGPGGLVAHECILDLRPIKETSGITVDDVAKRLADYGFHAPTMSFPVPGTLMVEPTESESKEELDRFIEAMIAIREEIRAVEDGRSDREDNPLKHAPHTAAVVIANDWKHAYARETAAYPLPTLIAKKYWPPVGRADNVYGDRNLFCSCVPIADYE.

The residue at position 726 (lysine 726) is an N6-(pyridoxal phosphate)lysine.

The protein belongs to the GcvP family. The glycine cleavage system is composed of four proteins: P, T, L and H. Pyridoxal 5'-phosphate is required as a cofactor.

The catalysed reaction is N(6)-[(R)-lipoyl]-L-lysyl-[glycine-cleavage complex H protein] + glycine + H(+) = N(6)-[(R)-S(8)-aminomethyldihydrolipoyl]-L-lysyl-[glycine-cleavage complex H protein] + CO2. Functionally, the glycine cleavage system catalyzes the degradation of glycine. The P protein binds the alpha-amino group of glycine through its pyridoxal phosphate cofactor; CO(2) is released and the remaining methylamine moiety is then transferred to the lipoamide cofactor of the H protein. This is Glycine dehydrogenase (decarboxylating) from Paraburkholderia phytofirmans (strain DSM 17436 / LMG 22146 / PsJN) (Burkholderia phytofirmans).